A 601-amino-acid chain; its full sequence is MSSSFFIPFLVSQILLSLFFSIIILIKKLLRTQITVGTHYYISVISLLALIAPFIPFHFLKSHHFDWILNLGGAQSALSQTHSTDKTTEAIGQHVNWVQDFSLSIEQSSSKMIDSAFFAVWILGVAVMLLATLYSNLKIGKIKKNLQIVNNKELLSLFHTCKEEIRFHQKVILSRSPLIKSPITFGVIRPYIILPKDISMFSADEMKCVLLHELYHCKRKDMLINYFLCLLKIVYWFNPLVWYLSKEAKTEMEISCDFAVLKTLDKKLHLKYGEVILKFTSIKQRTSSLLAASEFSSSYKHIKRRIVTVVNFQTASPLLKAKSALVFTLVLGAILAGTPSVSILAMQKETRFLPGTNVEYEDYSTFFDKFSASGGFVLFNSNRKKYTIYNRKESTSRFAPASTYKVFSALLALESGIITKNDSHMTWDGTQYPYKEWNQDQDLFSAMSSSTTWYFQKLDRQIGEDHLRHYLKSIHYGNEDFSVPADYWLDGSLQISPLEQVNILKKFYDNEFDFKQSNIETVKDSIRLEESNGRVLSGKTGTSVINGELHAGWFIGYVETADNTFFFAVHIQGEKRAAGSSAAEIALSILDKKGIYPSVSR.

At 1–8 the chain is on the extracellular side; the sequence is MSSSFFIP. The helical transmembrane segment at 9–26 threads the bilayer; that stretch reads FLVSQILLSLFFSIIILI. Residues 27–35 lie on the Cytoplasmic side of the membrane; the sequence is KKLLRTQIT. Residues 36 to 52 form a helical membrane-spanning segment; the sequence is VGTHYYISVISLLALIA. Residues 53 to 115 lie on the Extracellular side of the membrane; that stretch reads PFIPFHFLKS…EQSSSKMIDS (63 aa). The helical transmembrane segment at 116-133 threads the bilayer; it reads AFFAVWILGVAVMLLATL. The Cytoplasmic segment spans residues 134 to 322; it reads YSNLKIGKIK…QTASPLLKAK (189 aa). A helical membrane pass occupies residues 323–339; that stretch reads SALVFTLVLGAILAGTP. The Extracellular segment spans residues 340-601; that stretch reads SVSILAMQKE…KKGIYPSVSR (262 aa). The interval 354–601 is beta-lactam antibiotic sensor domain; sequence PGTNVEYEDY…KKGIYPSVSR (248 aa). Ser402 (acyl-ester intermediate) is an active-site residue. Residue Lys405 is modified to N6-carboxylysine.

This sequence belongs to the peptidase M56 family. In terms of processing, carboxylation occurs on two lysine residues. Carboxylation at 'Lys-405' activates the active site serine residue for acylation. On acylation, the lysine side chain experiences a spontaneous decarboxylation that entraps the sensor in its activated state.

It localises to the cell membrane. Functionally, integral membrane protein involved in sensing of the presence of beta-lactam antibiotics and transduction of the information to the cytoplasm. Mechanistically, activation of the signal transducer involves acylation of a serine in the C-terminal sensor domain upon binding of the beta-lactam antibiotic. In turn, a conformational change occurs and the signal is transmitted from the cell surface to the cytoplasm. There, the zinc protease domain is activated and initiates autoproteolysis as well as cleavage of the transcriptional repressor BlaI leading to derepression of antibiotic resistance genes. The polypeptide is Regulatory protein BlaR1 (blaR1) (Bacillus licheniformis).